A 122-amino-acid polypeptide reads, in one-letter code: Large ribosomal subunit protein uL14 (122 aa).

It belongs to the universal ribosomal protein uL14 family. As to quaternary structure, part of the 50S ribosomal subunit. Forms a cluster with proteins L3 and L19. In the 70S ribosome, L14 and L19 interact and together make contacts with the 16S rRNA in bridges B5 and B8.

Its function is as follows. Binds to 23S rRNA. Forms part of two intersubunit bridges in the 70S ribosome. This Chloroflexus aggregans (strain MD-66 / DSM 9485) protein is Large ribosomal subunit protein uL14.